A 301-amino-acid polypeptide reads, in one-letter code: Sulfate adenylyltransferase subunit 2 (301 aa).

The tract at residues 279–301 (RQGRMIDHDSSGSMEEKKKQGYF) is disordered.

The protein belongs to the PAPS reductase family. CysD subfamily. Heterodimer composed of CysD, the smaller subunit, and CysN.

The catalysed reaction is sulfate + ATP + H(+) = adenosine 5'-phosphosulfate + diphosphate. Its pathway is sulfur metabolism; hydrogen sulfide biosynthesis; sulfite from sulfate: step 1/3. With CysN forms the ATP sulfurylase (ATPS) that catalyzes the adenylation of sulfate producing adenosine 5'-phosphosulfate (APS) and diphosphate, the first enzymatic step in sulfur assimilation pathway. APS synthesis involves the formation of a high-energy phosphoric-sulfuric acid anhydride bond driven by GTP hydrolysis by CysN coupled to ATP hydrolysis by CysD. This chain is Sulfate adenylyltransferase subunit 2, found in Marinomonas sp. (strain MWYL1).